We begin with the raw amino-acid sequence, 316 residues long: 4-hydroxy-3-methylbut-2-enyl diphosphate reductase (316 aa).

A [4Fe-4S] cluster-binding site is contributed by C12. Residues H43 and H81 each contribute to the (2E)-4-hydroxy-3-methylbut-2-enyl diphosphate site. Dimethylallyl diphosphate contacts are provided by H43 and H81. H43 and H81 together coordinate isopentenyl diphosphate. [4Fe-4S] cluster is bound at residue C103. Residue H131 participates in (2E)-4-hydroxy-3-methylbut-2-enyl diphosphate binding. H131 serves as a coordination point for dimethylallyl diphosphate. H131 lines the isopentenyl diphosphate pocket. Residue E133 is the Proton donor of the active site. T170 contacts (2E)-4-hydroxy-3-methylbut-2-enyl diphosphate. A [4Fe-4S] cluster-binding site is contributed by C198. 3 residues coordinate (2E)-4-hydroxy-3-methylbut-2-enyl diphosphate: S226, N228, and S271. Dimethylallyl diphosphate is bound by residues S226, N228, and S271. 3 residues coordinate isopentenyl diphosphate: S226, N228, and S271.

This sequence belongs to the IspH family. [4Fe-4S] cluster serves as cofactor.

The enzyme catalyses isopentenyl diphosphate + 2 oxidized [2Fe-2S]-[ferredoxin] + H2O = (2E)-4-hydroxy-3-methylbut-2-enyl diphosphate + 2 reduced [2Fe-2S]-[ferredoxin] + 2 H(+). The catalysed reaction is dimethylallyl diphosphate + 2 oxidized [2Fe-2S]-[ferredoxin] + H2O = (2E)-4-hydroxy-3-methylbut-2-enyl diphosphate + 2 reduced [2Fe-2S]-[ferredoxin] + 2 H(+). It participates in isoprenoid biosynthesis; dimethylallyl diphosphate biosynthesis; dimethylallyl diphosphate from (2E)-4-hydroxy-3-methylbutenyl diphosphate: step 1/1. Its pathway is isoprenoid biosynthesis; isopentenyl diphosphate biosynthesis via DXP pathway; isopentenyl diphosphate from 1-deoxy-D-xylulose 5-phosphate: step 6/6. In terms of biological role, catalyzes the conversion of 1-hydroxy-2-methyl-2-(E)-butenyl 4-diphosphate (HMBPP) into a mixture of isopentenyl diphosphate (IPP) and dimethylallyl diphosphate (DMAPP). Acts in the terminal step of the DOXP/MEP pathway for isoprenoid precursor biosynthesis. The protein is 4-hydroxy-3-methylbut-2-enyl diphosphate reductase of Bacillus cereus (strain B4264).